Consider the following 213-residue polypeptide: Orotate phosphoribosyltransferase (213 aa).

Lysine 26 contributes to the 5-phospho-alpha-D-ribose 1-diphosphate binding site. 34-35 is an orotate binding site; sequence FF. 5-phospho-alpha-D-ribose 1-diphosphate is bound by residues 72–73, arginine 99, lysine 100, lysine 103, histidine 105, and 124–132; these read YK and DDVITAGTA. Residues threonine 128 and arginine 156 each contribute to the orotate site.

Belongs to the purine/pyrimidine phosphoribosyltransferase family. PyrE subfamily. As to quaternary structure, homodimer. Mg(2+) is required as a cofactor.

It catalyses the reaction orotidine 5'-phosphate + diphosphate = orotate + 5-phospho-alpha-D-ribose 1-diphosphate. It functions in the pathway pyrimidine metabolism; UMP biosynthesis via de novo pathway; UMP from orotate: step 1/2. Catalyzes the transfer of a ribosyl phosphate group from 5-phosphoribose 1-diphosphate to orotate, leading to the formation of orotidine monophosphate (OMP). The chain is Orotate phosphoribosyltransferase from Photorhabdus laumondii subsp. laumondii (strain DSM 15139 / CIP 105565 / TT01) (Photorhabdus luminescens subsp. laumondii).